A 1984-amino-acid polypeptide reads, in one-letter code: Sodium channel protein type 9 subunit alpha (1984 aa).

The Cytoplasmic segment spans residues Met1–His125. A compositionally biased stretch (basic and acidic residues) spans Arg26–Lys39. The segment at Arg26–Ala55 is disordered. The I repeat unit spans residues Phe112 to Gln410. Residues Ser126–Met145 traverse the membrane as a helical segment. At Ser146 to Asp150 the chain is on the extracellular side. The helical transmembrane segment at Trp151 to Leu172 threads the bilayer. Over Ala173–Arg185 the chain is Cytoplasmic. A helical membrane pass occupies residues Asp186 to Phe204. Residues Val205–Val210 are Extracellular-facing. The chain crosses the membrane as a helical span at residues Ser211–Val227. Residues Ile228–Ser241 are Cytoplasmic-facing. A helical membrane pass occupies residues Val242–Phe267. Residues Met268–Thr346 lie on the Extracellular side of the membrane. Cysteines 275 and 324 form a disulfide. Positions Phe347–Trp363 form an intramembrane region, pore-forming. Residues Glu364–Lys376 lie on the Extracellular side of the membrane. Residues Thr377 to Ala402 traverse the membrane as a helical segment. Residues Ala402–Ser449 are a coiled coil. At Met403 to Phe744 the chain is on the cytoplasmic side. A compositionally biased stretch (low complexity) spans Leu458–Lys471. Disordered stretches follow at residues Leu458–Gly540 and His574–Pro609. A compositionally biased stretch (basic residues) spans Lys474–Lys486. Basic and acidic residues-rich tracts occupy residues Ser489–Arg509 and His574–Arg584. A coiled-coil region spans residues Leu684–Lys708. One copy of the II repeat lies at Cys725–Gln988. A helical transmembrane segment spans residues Val745 to Ala761. Residues Met762 to Glu770 lie on the Extracellular side of the membrane. A helical transmembrane segment spans residues Phe771 to Ile795. At Ala796–Gln804 the chain is on the cytoplasmic side. The chain crosses the membrane as a helical span at residues Val805–Glu821. Over Leu822 to Leu830 the chain is Extracellular. A helical membrane pass occupies residues Ser831–Ser847. The Cytoplasmic portion of the chain corresponds to Trp848–Ala864. Residues Leu865–Phe887 form a helical membrane-spanning segment. At Gly888 to His914 the chain is on the extracellular side. Cysteines 896 and 902 form a disulfide. Residues Ser915–Trp927 constitute an intramembrane region (pore-forming). The Extracellular portion of the chain corresponds to Ile928–Gly939. The cysteines at positions 934 and 943 are disulfide-linked. The helical transmembrane segment at Gln940–Leu966 threads the bilayer. Topologically, residues Leu967–Arg1185 are cytoplasmic. 2 disordered regions span residues Lys1015–Asn1039 and Pro1089–Asn1145. A compositionally biased stretch (basic and acidic residues) spans Gly1019–Asn1035. The segment covering Gly1135–Asn1145 has biased composition (acidic residues). The stretch at Thr1178–Leu1486 is one III repeat. Residues Ile1186–Glu1210 form a helical membrane-spanning segment. Residues Asp1211 to Ile1222 are Extracellular-facing. A helical membrane pass occupies residues Ile1223–Tyr1248. At Lys1249–Thr1250 the chain is on the cytoplasmic side. A helical membrane pass occupies residues Tyr1251–Leu1276. Topologically, residues Gly1277–Lys1285 are extracellular. The chain crosses the membrane as a helical span at residues Ser1286–Phe1302. Residues Glu1303–Ala1315 lie on the Cytoplasmic side of the membrane. A helical transmembrane segment spans residues Ile1316–Leu1340. The Extracellular segment spans residues Phe1341–Leu1392. Cysteines 1348 and 1368 form a disulfide. Residues Gly1393 to Phe1403 constitute an intramembrane region (pore-forming). Residues Lys1404–Leu1429 are Extracellular-facing. Residues Tyr1430–Ile1455 traverse the membrane as a helical segment. Residues Asp1456 to Asn1512 lie on the Cytoplasmic side of the membrane. The residue at position 1488 (Ser1488) is a Phosphoserine; by PKC. An IV repeat occupies Ile1495–Gln1793. The helical transmembrane segment at Gln1513–Val1532 threads the bilayer. The Extracellular portion of the chain corresponds to Glu1533 to Phe1543. Residues Val1544–Ile1565 form a helical membrane-spanning segment. Residues Ser1566–Val1574 are Cytoplasmic-facing. The chain crosses the membrane as a helical span at residues Gly1575–Met1596. Topologically, residues Ile1597–Thr1605 are extracellular. Residues Leu1606–Ala1625 form a helical membrane-spanning segment. Topologically, residues Lys1626–Ser1638 are cytoplasmic. The helical transmembrane segment at Leu1639–Met1661 threads the bilayer. Residues Ser1662–Asn1684 lie on the Extracellular side of the membrane. The segment at residues Ser1685 to Gly1697 is an intramembrane region (pore-forming). The Extracellular segment spans residues Trp1698–Pro1731. Cys1713 and Cys1728 are oxidised to a cystine. The chain crosses the membrane as a helical span at residues Ser1732–Ile1757. At Leu1758–Lys1984 the chain is on the cytoplasmic side. The 30-residue stretch at Glu1887–Lys1916 folds into the IQ domain. Residues Asp1933–Lys1984 form a disordered region. Residues Ala1946–Ser1958 show a composition bias toward polar residues. A compositionally biased stretch (basic and acidic residues) spans Thr1960–Lys1984.

The protein belongs to the sodium channel (TC 1.A.1.10) family. Nav1.7/SCN9A subfamily. The Nav1.7 voltage-gated sodium channel consists of an ion-conducting alpha subunit SCN9A which is functional on its own regulated by one or more beta-1 (SCN1B), beta-2 (SCN2B), beta-3 (SCN3B) and beta-4 (SCN4B) subunits. SCN1B and SCN3B are non-covalently associated with SCN9A. SCN2B and SCN4B are disulfide-linked to SCN9A. SCN1B regulates channel inactivation. Interacts with NEDD4 and NEDD4L; regulates Nav1.7 activity most probably through ubiquitination and subsequent endocytosis. Interacts with TMEM233; modulates the gating properties of NaV1.7. In terms of processing, ubiquitinated by NEDD4L; which may promote its endocytosis. Post-translationally, phosphorylation at Ser-1488 by PKC in a highly conserved cytoplasmic loop increases peak sodium currents. In terms of tissue distribution, expressed strongly in sciatic nerves, with moderate levels in kidney. Not detected in liver, brain and muscle.

It localises to the cell membrane. The protein resides in the cell projection. Its subcellular location is the neuron projection. The protein localises to the axon. The catalysed reaction is Na(+)(in) = Na(+)(out). Its function is as follows. Pore-forming subunit of Nav1.7, a voltage-gated sodium (Nav) channel that directly mediates the depolarizing phase of action potentials in excitable membranes. Navs, also called VGSCs (voltage-gated sodium channels) or VDSCs (voltage-dependent sodium channels), operate by switching between closed and open conformations depending on the voltage difference across the membrane. In the open conformation they allow Na(+) ions to selectively pass through the pore, along their electrochemical gradient. The influx of Na(+) ions provokes membrane depolarization, initiating the propagation of electrical signals throughout cells and tissues. Nav1.7 plays a crucial role in controlling the excitability and action potential propagation from nociceptor neurons, thereby contributing to the sensory perception of pain. The chain is Sodium channel protein type 9 subunit alpha from Mus musculus (Mouse).